The sequence spans 157 residues: Ribosome maturation factor RimM (157 aa).

In terms of domain architecture, PRC barrel spans 89 to 156 (PGEYYHVDLI…DRLLIDPEFV (68 aa)).

The protein belongs to the RimM family. As to quaternary structure, binds ribosomal protein uS19.

It is found in the cytoplasm. Its function is as follows. An accessory protein needed during the final step in the assembly of 30S ribosomal subunit, possibly for assembly of the head region. Essential for efficient processing of 16S rRNA. May be needed both before and after RbfA during the maturation of 16S rRNA. It has affinity for free ribosomal 30S subunits but not for 70S ribosomes. This is Ribosome maturation factor RimM from Rhizorhabdus wittichii (strain DSM 6014 / CCUG 31198 / JCM 15750 / NBRC 105917 / EY 4224 / RW1) (Sphingomonas wittichii).